The sequence spans 219 residues: 7-methyl-GTP pyrophosphatase (219 aa).

Asp89 functions as the Proton acceptor in the catalytic mechanism.

This sequence belongs to the Maf family. YceF subfamily. Requires a divalent metal cation as cofactor.

It localises to the cytoplasm. The catalysed reaction is N(7)-methyl-GTP + H2O = N(7)-methyl-GMP + diphosphate + H(+). In terms of biological role, nucleoside triphosphate pyrophosphatase that hydrolyzes 7-methyl-GTP (m(7)GTP). May have a dual role in cell division arrest and in preventing the incorporation of modified nucleotides into cellular nucleic acids. This Polaromonas sp. (strain JS666 / ATCC BAA-500) protein is 7-methyl-GTP pyrophosphatase.